A 164-amino-acid polypeptide reads, in one-letter code: UPF0114 protein Sbal_0780 (164 aa).

4 helical membrane passes run 15–35 (IMAPIYLGLSLILFALGVKFF), 53–73 (LVLLTLSLIDITLVGGLIVMV), 109–129 (VAASIVAISSIHLLKVFMNAE), and 136–156 (IMWYLLIHITFVLSAFAMGYL).

This sequence belongs to the UPF0114 family.

It is found in the cell membrane. The protein is UPF0114 protein Sbal_0780 of Shewanella baltica (strain OS155 / ATCC BAA-1091).